Here is a 782-residue protein sequence, read N- to C-terminus: Zinc finger Y-chromosomal protein 1 (782 aa).

Disordered stretches follow at residues 211 to 233 (ADLE…SKLD) and 360 to 386 (LNQD…ESKQ). The span at 217 to 229 (SEVTMNAESGTDS) shows a compositional bias: polar residues. Residues 372-382 (PKQKSKKKKRP) carry the Nuclear localization signal motif. A compositionally biased stretch (basic residues) spans 373–382 (KQKSKKKKRP). 13 consecutive C2H2-type zinc fingers follow at residues 403-425 (YPCM…TKNH), 434-456 (YHCT…MESH), 466-488 (TECD…KTMH), 497-520 (CKCK…LVVH), 526-548 (HICG…IRVH), 554-577 (YECQ…KSKH), 583-605 (LKCG…AVLH), 611-634 (HQCS…ISVH), 640-662 (HKCD…VATH), 668-691 (HQCR…LSAH), 697-719 (FKCK…MKTH), 725-748 (YQCE…ISIH), and 754-777 (HSCD…MRHH).

This sequence belongs to the krueppel C2H2-type zinc-finger protein family. ZFX/ZFY subfamily.

It localises to the nucleus. In terms of biological role, probable transcriptional activator. Binds to the consensus sequence 5'-AGGCCY-3'. The polypeptide is Zinc finger Y-chromosomal protein 1 (Zfy1) (Mus musculus (Mouse)).